Reading from the N-terminus, the 319-residue chain is Cobalamin biosynthesis protein CbiB (319 aa).

The next 5 helical transmembrane spans lie at 56-76 (VMWV…LALA), 82-102 (WFGW…RSLA), 153-173 (VDGI…LAMA), 204-224 (VANY…AGLC), and 296-316 (LMWV…CGLS).

The protein belongs to the CobD/CbiB family.

It localises to the cell membrane. It participates in cofactor biosynthesis; adenosylcobalamin biosynthesis. Converts cobyric acid to cobinamide by the addition of aminopropanol on the F carboxylic group. However, the true cosubstrate could be (R)-1-amino-2-propanol O-2-phosphate, leading to cobinamide phosphate. This is Cobalamin biosynthesis protein CbiB from Salmonella choleraesuis (strain SC-B67).